The primary structure comprises 394 residues: Na(+)/H(+) antiporter NhaA (394 aa).

The next 11 helical transmembrane spans lie at Ile17–Val37, Leu59–Val79, Ser95–Phe115, Val124–Leu144, Val154–Phe174, Thr177–Leu197, Phe213–Ile233, Phe261–Leu281, Pro287–Phe307, Ile328–Leu348, and Leu363–Val383.

Belongs to the NhaA Na(+)/H(+) (TC 2.A.33) antiporter family.

The protein localises to the cell inner membrane. It carries out the reaction Na(+)(in) + 2 H(+)(out) = Na(+)(out) + 2 H(+)(in). In terms of biological role, na(+)/H(+) antiporter that extrudes sodium in exchange for external protons. The sequence is that of Na(+)/H(+) antiporter NhaA from Shewanella frigidimarina (strain NCIMB 400).